A 363-amino-acid polypeptide reads, in one-letter code: GTPase Obg (363 aa).

An Obg domain is found at 1–159; it reads MKFVDEAFID…KSLKLELKVL (159 aa). Positions 160 to 341 constitute an OBG-type G domain; that stretch reads ADVGLLGRPN…LVHAIFGHVQ (182 aa). Residues 166 to 173, 191 to 195, 213 to 216, 291 to 294, and 322 to 324 each bind GTP; these read GRPNAGKS, FTTLH, DIPG, NKLD, and SAL. Positions 173 and 193 each coordinate Mg(2+). The interval 343-363 is disordered; sequence GQRMDNEPPPLDPRFASAGPA.

The protein belongs to the TRAFAC class OBG-HflX-like GTPase superfamily. OBG GTPase family. As to quaternary structure, monomer. It depends on Mg(2+) as a cofactor.

Its subcellular location is the cytoplasm. Its function is as follows. An essential GTPase which binds GTP, GDP and possibly (p)ppGpp with moderate affinity, with high nucleotide exchange rates and a fairly low GTP hydrolysis rate. Plays a role in control of the cell cycle, stress response, ribosome biogenesis and in those bacteria that undergo differentiation, in morphogenesis control. The polypeptide is GTPase Obg (Verminephrobacter eiseniae (strain EF01-2)).